The primary structure comprises 101 residues: Citrate lyase acyl carrier protein (101 aa).

Ser-14 is modified (O-(phosphoribosyl dephospho-coenzyme A)serine).

This sequence belongs to the CitD family. In terms of assembly, oligomer with a subunit composition of (alpha,beta,gamma)6.

It localises to the cytoplasm. In terms of biological role, covalent carrier of the coenzyme of citrate lyase. The chain is Citrate lyase acyl carrier protein from Clostridium perfringens (strain 13 / Type A).